Here is a 479-residue protein sequence, read N- to C-terminus: Ribulose bisphosphate carboxylase large chain 2 (479 aa).

Substrate is bound by residues asparagine 116 and threonine 166. Residue lysine 168 is the Proton acceptor of the active site. Lysine 170 is a binding site for substrate. Mg(2+) contacts are provided by lysine 194, aspartate 196, and glutamate 197. Position 194 is an N6-carboxylysine (lysine 194). Residue histidine 287 is the Proton acceptor of the active site. Positions 288, 320, and 372 each coordinate substrate.

Belongs to the RuBisCO large chain family. Type I subfamily. As to quaternary structure, heterohexadecamer of 8 large chains and 8 small chains. Mg(2+) serves as cofactor.

The catalysed reaction is 2 (2R)-3-phosphoglycerate + 2 H(+) = D-ribulose 1,5-bisphosphate + CO2 + H2O. It catalyses the reaction D-ribulose 1,5-bisphosphate + O2 = 2-phosphoglycolate + (2R)-3-phosphoglycerate + 2 H(+). Functionally, ruBisCO catalyzes two reactions: the carboxylation of D-ribulose 1,5-bisphosphate, the primary event in carbon dioxide fixation, as well as the oxidative fragmentation of the pentose substrate. Both reactions occur simultaneously and in competition at the same active site. The sequence is that of Ribulose bisphosphate carboxylase large chain 2 from Bradyrhizobium sp. (strain BTAi1 / ATCC BAA-1182).